The following is an 825-amino-acid chain: Lon protease (825 aa).

One can recognise a Lon N-terminal domain in the interval leucine 41–lysine 237. Glycine 388–threonine 395 provides a ligand contact to ATP. The Lon proteolytic domain occupies serine 625–leucine 805. Catalysis depends on residues serine 711 and lysine 754.

The protein belongs to the peptidase S16 family. As to quaternary structure, homohexamer. Organized in a ring with a central cavity.

The protein localises to the cytoplasm. The enzyme catalyses Hydrolysis of proteins in presence of ATP.. Its function is as follows. ATP-dependent serine protease that mediates the selective degradation of mutant and abnormal proteins as well as certain short-lived regulatory proteins. Required for cellular homeostasis and for survival from DNA damage and developmental changes induced by stress. Degrades polypeptides processively to yield small peptide fragments that are 5 to 10 amino acids long. Binds to DNA in a double-stranded, site-specific manner. The chain is Lon protease from Methanosphaera stadtmanae (strain ATCC 43021 / DSM 3091 / JCM 11832 / MCB-3).